We begin with the raw amino-acid sequence, 362 residues long: tRNA 2-selenouridine synthase (362 aa).

In terms of domain architecture, Rhodanese spans 12 to 135 (FLNDTPLLDV…LRRFLIDEME (124 aa)). Catalysis depends on Cys95, which acts as the S-selanylcysteine intermediate.

Belongs to the SelU family. In terms of assembly, monomer.

It carries out the reaction 5-methylaminomethyl-2-thiouridine(34) in tRNA + selenophosphate + (2E)-geranyl diphosphate + H2O + H(+) = 5-methylaminomethyl-2-selenouridine(34) in tRNA + (2E)-thiogeraniol + phosphate + diphosphate. The enzyme catalyses 5-methylaminomethyl-2-thiouridine(34) in tRNA + (2E)-geranyl diphosphate = 5-methylaminomethyl-S-(2E)-geranyl-thiouridine(34) in tRNA + diphosphate. The catalysed reaction is 5-methylaminomethyl-S-(2E)-geranyl-thiouridine(34) in tRNA + selenophosphate + H(+) = 5-methylaminomethyl-2-(Se-phospho)selenouridine(34) in tRNA + (2E)-thiogeraniol. It catalyses the reaction 5-methylaminomethyl-2-(Se-phospho)selenouridine(34) in tRNA + H2O = 5-methylaminomethyl-2-selenouridine(34) in tRNA + phosphate. Involved in the post-transcriptional modification of the uridine at the wobble position (U34) of tRNA(Lys), tRNA(Glu) and tRNA(Gln). Catalyzes the conversion of 2-thiouridine (S2U-RNA) to 2-selenouridine (Se2U-RNA). Acts in a two-step process involving geranylation of 2-thiouridine (S2U) to S-geranyl-2-thiouridine (geS2U) and subsequent selenation of the latter derivative to 2-selenouridine (Se2U) in the tRNA chain. This is tRNA 2-selenouridine synthase from Alcanivorax borkumensis (strain ATCC 700651 / DSM 11573 / NCIMB 13689 / SK2).